The primary structure comprises 312 residues: Malate dehydrogenase (312 aa).

NAD(+)-binding positions include 7 to 13 (GAAGGIG) and D34. Substrate-binding residues include R81 and R87. NAD(+) contacts are provided by residues N94 and 117–119 (ITN). The substrate site is built by N119 and R153. H177 (proton acceptor) is an active-site residue. Position 227 (M227) interacts with NAD(+).

The protein belongs to the LDH/MDH superfamily. MDH type 1 family. In terms of assembly, homodimer.

It carries out the reaction (S)-malate + NAD(+) = oxaloacetate + NADH + H(+). Functionally, catalyzes the reversible oxidation of malate to oxaloacetate. The protein is Malate dehydrogenase of Escherichia coli O17:K52:H18 (strain UMN026 / ExPEC).